Here is a 361-residue protein sequence, read N- to C-terminus: Large ribosomal subunit protein mL45 (361 aa).

A disordered region spans residues 319-361 (EPPKELSAGDAEVKQVDSVGEQSKEQLPLATPVESHTKPSLAI).

It belongs to the mitochondrion-specific ribosomal protein mL45 family.

It localises to the mitochondrion. This Drosophila melanogaster (Fruit fly) protein is Large ribosomal subunit protein mL45 (mRpL45).